Consider the following 87-residue polypeptide: Asparagine--tRNA ligase, cytoplasmic (87 aa).

This sequence belongs to the class-II aminoacyl-tRNA synthetase family.

It is found in the cytoplasm. The enzyme catalyses tRNA(Asn) + L-asparagine + ATP = L-asparaginyl-tRNA(Asn) + AMP + diphosphate + H(+). The polypeptide is Asparagine--tRNA ligase, cytoplasmic (DED81) (Saccharomyces paradoxus (Yeast)).